A 154-amino-acid polypeptide reads, in one-letter code: Aspartate carbamoyltransferase regulatory chain (154 aa).

The Zn(2+) site is built by Cys109, Cys114, Cys138, and Cys141.

Belongs to the PyrI family. As to quaternary structure, contains catalytic and regulatory chains. Requires Zn(2+) as cofactor.

Its function is as follows. Involved in allosteric regulation of aspartate carbamoyltransferase. The sequence is that of Aspartate carbamoyltransferase regulatory chain from Sodalis glossinidius (strain morsitans).